A 215-amino-acid chain; its full sequence is Ribosomal RNA small subunit methyltransferase G (215 aa).

S-adenosyl-L-methionine-binding residues include Gly-71, Leu-76, and Arg-135.

The protein belongs to the methyltransferase superfamily. RNA methyltransferase RsmG family.

It is found in the cytoplasm. Functionally, specifically methylates the N7 position of a guanine in 16S rRNA. This chain is Ribosomal RNA small subunit methyltransferase G, found in Salinibacter ruber (strain DSM 13855 / M31).